Reading from the N-terminus, the 403-residue chain is S-adenosylmethionine synthase (403 aa).

ATP is bound at residue H17. D19 is a Mg(2+) binding site. E45 is a K(+) binding site. L-methionine-binding residues include E58 and Q104. A flexible loop region spans residues 104-114 (QSPDIAQGVDT). ATP is bound by residues 179–181 (DGK), 250–251 (KF), D259, 265–266 (RK), A282, and K286. Position 259 (D259) interacts with L-methionine. K290 lines the L-methionine pocket.

This sequence belongs to the AdoMet synthase family. As to quaternary structure, homotetramer; dimer of dimers. Mg(2+) is required as a cofactor. The cofactor is K(+).

The protein resides in the cytoplasm. The catalysed reaction is L-methionine + ATP + H2O = S-adenosyl-L-methionine + phosphate + diphosphate. Its pathway is amino-acid biosynthesis; S-adenosyl-L-methionine biosynthesis; S-adenosyl-L-methionine from L-methionine: step 1/1. Functionally, catalyzes the formation of S-adenosylmethionine (AdoMet) from methionine and ATP. The overall synthetic reaction is composed of two sequential steps, AdoMet formation and the subsequent tripolyphosphate hydrolysis which occurs prior to release of AdoMet from the enzyme. This chain is S-adenosylmethionine synthase, found in Mycobacterium marinum (strain ATCC BAA-535 / M).